The following is a 149-amino-acid chain: Transcription antitermination protein NusB (149 aa).

This sequence belongs to the NusB family.

Its function is as follows. Involved in transcription antitermination. Required for transcription of ribosomal RNA (rRNA) genes. Binds specifically to the boxA antiterminator sequence of the ribosomal RNA (rrn) operons. The sequence is that of Transcription antitermination protein NusB from Acinetobacter baumannii (strain SDF).